Reading from the N-terminus, the 380-residue chain is Mitogen-activated protein kinase 3 (380 aa).

An N-acetylalanine modification is found at Ala2. The region spanning Tyr43–Leu331 is the Protein kinase domain. ATP is bound by residues Ile49–Val57 and Lys72. Residue Asp167 is the Proton acceptor of the active site. At Thr199 the chain carries Phosphothreonine. Residue Thr203 is modified to Phosphothreonine; by MAP2K1 and MAP2K2. The TXY motif lies at Thr203–Tyr205. Tyr205 bears the Phosphotyrosine; by MAP2K1 and MAP2K2 mark. Thr208 bears the Phosphothreonine; by autocatalysis mark.

Belongs to the protein kinase superfamily. CMGC Ser/Thr protein kinase family. MAP kinase subfamily. As to quaternary structure, binds both upstream activators and downstream substrates in multimolecular complexes. Found in a complex with at least BRAF, HRAS, MAP2K1/MEK1, MAPK3 and RGS14. Interacts with TPR. Interacts with ADAM15, ARRB2, CANX, DAPK1 (via death domain), HSF4, IER3, MAP2K1/MEK1, NISCH, and SGK1. Interacts with MORG1. Interacts with PEA15. Interacts with isoform 1 of MKNK2 and this binding prevents from dephosphorylation and inactivation. Interacts with CDKN2AIP. Interacts with HSF1 (via D domain and preferentially with hyperphosphorylated form); this interaction occurs upon heat shock. Interacts with CAVIN4. Interacts with GIT1; this interaction is necessary for MAPK3 localization to focal adhesions. Interacts with ZNF263. Interacts with EBF4. Mg(2+) is required as a cofactor. Post-translationally, dually phosphorylated on Thr-203 and Tyr-205, which activates the enzyme. Ligand-activated ALK induces tyrosine phosphorylation. Dephosphorylated by PTPRJ at Tyr-205. Autophosphorylated on threonine and tyrosine residues in vitro. Phosphorylated upon FLT3 and KIT signaling. Ubiquitinated by TRIM15 via 'Lys-63'-linked ubiquitination; leading to activation. Deubiquitinated by CYLD.

The protein localises to the cytoplasm. Its subcellular location is the nucleus. It is found in the membrane. It localises to the caveola. The protein resides in the cell junction. The protein localises to the focal adhesion. The enzyme catalyses L-seryl-[protein] + ATP = O-phospho-L-seryl-[protein] + ADP + H(+). The catalysed reaction is L-threonyl-[protein] + ATP = O-phospho-L-threonyl-[protein] + ADP + H(+). Its activity is regulated as follows. Phosphorylated by MAP2K1/MEK1 and MAP2K2/MEK2 on Thr-203 and Tyr-205 in response to external stimuli like insulin or NGF. Both phosphorylations are required for activity. This phosphorylation causes dramatic conformational changes, which enable full activation and interaction of MAPK1/ERK2 with its substrates. Dephosphorylated and inactivated by DUSP3, DUSP6 and DUSP9. Serine/threonine kinase which acts as an essential component of the MAP kinase signal transduction pathway. MAPK1/ERK2 and MAPK3/ERK1 are the 2 MAPKs which play an important role in the MAPK/ERK cascade. They participate also in a signaling cascade initiated by activated KIT and KITLG/SCF. Depending on the cellular context, the MAPK/ERK cascade mediates diverse biological functions such as cell growth, adhesion, survival and differentiation through the regulation of transcription, translation, cytoskeletal rearrangements. The MAPK/ERK cascade also plays a role in initiation and regulation of meiosis, mitosis, and postmitotic functions in differentiated cells by phosphorylating a number of transcription factors. About 160 substrates have already been discovered for ERKs. Many of these substrates are localized in the nucleus, and seem to participate in the regulation of transcription upon stimulation. However, other substrates are found in the cytosol as well as in other cellular organelles, and those are responsible for processes such as translation, mitosis and apoptosis. Moreover, the MAPK/ERK cascade is also involved in the regulation of the endosomal dynamics, including lysosome processing and endosome cycling through the perinuclear recycling compartment (PNRC); as well as in the fragmentation of the Golgi apparatus during mitosis. The substrates include transcription factors (such as ATF2, BCL6, ELK1, ERF, FOS, HSF4 or SPZ1), cytoskeletal elements (such as CANX, CTTN, GJA1, MAP2, MAPT, PXN, SORBS3 or STMN1), regulators of apoptosis (such as BAD, BTG2, CASP9, DAPK1, IER3, MCL1 or PPARG), regulators of translation (such as EIF4EBP1) and a variety of other signaling-related molecules (like ARHGEF2, DEPTOR, FRS2 or GRB10). Protein kinases (such as RAF1, RPS6KA1/RSK1, RPS6KA3/RSK2, RPS6KA2/RSK3, RPS6KA6/RSK4, SYK, MKNK1/MNK1, MKNK2/MNK2, RPS6KA5/MSK1, RPS6KA4/MSK2, MAPKAPK3 or MAPKAPK5) and phosphatases (such as DUSP1, DUSP4, DUSP6 or DUSP16) are other substrates which enable the propagation the MAPK/ERK signal to additional cytosolic and nuclear targets, thereby extending the specificity of the cascade. The chain is Mitogen-activated protein kinase 3 (Mapk3) from Mus musculus (Mouse).